Consider the following 264-residue polypeptide: NAD-capped RNA hydrolase NudC (264 aa).

A substrate-binding site is contributed by R70. Residues C99 and C102 each contribute to the Zn(2+) site. E112 lines the substrate pocket. Residues C117 and C122 each contribute to the Zn(2+) site. Position 127 (Y127) interacts with substrate. Residues 128-252 enclose the Nudix hydrolase domain; sequence PVICPCIIVA…TIALKLIEHT (125 aa). 3 residues coordinate a divalent metal cation: A161, E177, and E181. The Nudix box signature appears at 162 to 183; that stretch reads GFVEVGETFEQAVHREVLEETG. 195 to 202 contacts substrate; that stretch reads QPWAFPNS. Position 222 (E222) interacts with a divalent metal cation. A245 is a binding site for substrate.

This sequence belongs to the Nudix hydrolase family. NudC subfamily. In terms of assembly, homodimer. Requires Mg(2+) as cofactor. Mn(2+) serves as cofactor. Zn(2+) is required as a cofactor.

It catalyses the reaction a 5'-end NAD(+)-phospho-ribonucleoside in mRNA + H2O = a 5'-end phospho-adenosine-phospho-ribonucleoside in mRNA + beta-nicotinamide D-ribonucleotide + 2 H(+). The enzyme catalyses NAD(+) + H2O = beta-nicotinamide D-ribonucleotide + AMP + 2 H(+). It carries out the reaction NADH + H2O = reduced beta-nicotinamide D-ribonucleotide + AMP + 2 H(+). In terms of biological role, mRNA decapping enzyme that specifically removes the nicotinamide adenine dinucleotide (NAD) cap from a subset of mRNAs by hydrolyzing the diphosphate linkage to produce nicotinamide mononucleotide (NMN) and 5' monophosphate mRNA. The NAD-cap is present at the 5'-end of some mRNAs and stabilizes RNA against 5'-processing. Has preference for mRNAs with a 5'-end purine. Catalyzes the hydrolysis of a broad range of dinucleotide pyrophosphates. The polypeptide is NAD-capped RNA hydrolase NudC (Pasteurella multocida (strain Pm70)).